A 97-amino-acid chain; its full sequence is Small ribosomal subunit protein bS20 (97 aa).

The protein belongs to the bacterial ribosomal protein bS20 family.

Functionally, binds directly to 16S ribosomal RNA. The polypeptide is Small ribosomal subunit protein bS20 (Prochlorococcus marinus (strain MIT 9215)).